A 503-amino-acid chain; its full sequence is Probable cytosol aminopeptidase (503 aa).

Lys268 and Asp273 together coordinate Mn(2+). Lys280 is a catalytic residue. Residues Asp291, Asp350, and Glu352 each coordinate Mn(2+). Arg354 is an active-site residue.

This sequence belongs to the peptidase M17 family. The cofactor is Mn(2+).

It localises to the cytoplasm. It carries out the reaction Release of an N-terminal amino acid, Xaa-|-Yaa-, in which Xaa is preferably Leu, but may be other amino acids including Pro although not Arg or Lys, and Yaa may be Pro. Amino acid amides and methyl esters are also readily hydrolyzed, but rates on arylamides are exceedingly low.. It catalyses the reaction Release of an N-terminal amino acid, preferentially leucine, but not glutamic or aspartic acids.. Functionally, presumably involved in the processing and regular turnover of intracellular proteins. Catalyzes the removal of unsubstituted N-terminal amino acids from various peptides. This Corynebacterium efficiens (strain DSM 44549 / YS-314 / AJ 12310 / JCM 11189 / NBRC 100395) protein is Probable cytosol aminopeptidase.